The following is a 72-amino-acid chain: Translation initiation factor IF-1 (72 aa).

The 72-residue stretch at methionine 1 to arginine 72 folds into the S1-like domain.

The protein belongs to the IF-1 family. As to quaternary structure, component of the 30S ribosomal translation pre-initiation complex which assembles on the 30S ribosome in the order IF-2 and IF-3, IF-1 and N-formylmethionyl-tRNA(fMet); mRNA recruitment can occur at any time during PIC assembly.

The protein localises to the cytoplasm. In terms of biological role, one of the essential components for the initiation of protein synthesis. Stabilizes the binding of IF-2 and IF-3 on the 30S subunit to which N-formylmethionyl-tRNA(fMet) subsequently binds. Helps modulate mRNA selection, yielding the 30S pre-initiation complex (PIC). Upon addition of the 50S ribosomal subunit IF-1, IF-2 and IF-3 are released leaving the mature 70S translation initiation complex. This is Translation initiation factor IF-1 from Neisseria gonorrhoeae (strain ATCC 700825 / FA 1090).